The primary structure comprises 118 residues: Non-specific lipid-transfer protein-like 1 (118 aa).

One can recognise an SCP2 domain in the interval Ser5–Met113.

The polypeptide is Non-specific lipid-transfer protein-like 1 (nlt-1) (Caenorhabditis elegans).